The following is a 424-amino-acid chain: GTPase Obg (424 aa).

One can recognise an Obg domain in the interval 1–158; sequence MFVDKARIFV…RWISLELKLL (158 aa). The 173-residue stretch at 159–331 folds into the OBG-type G domain; sequence ADVGLIGFPN…LLKECARVLS (173 aa). GTP contacts are provided by residues 165-172, 190-194, 212-215, 282-285, and 312-314; these read GFPNVGKS, FTTIT, DIPG, NKAD, and SAA. Mg(2+)-binding residues include S172 and T192. An OCT domain is found at 345–424; sequence RFVPEDKHFT…LNDFEFEFLK (80 aa).

It belongs to the TRAFAC class OBG-HflX-like GTPase superfamily. OBG GTPase family. In terms of assembly, monomer. Requires Mg(2+) as cofactor.

It is found in the cytoplasm. Functionally, an essential GTPase which binds GTP, GDP and possibly (p)ppGpp with moderate affinity, with high nucleotide exchange rates and a fairly low GTP hydrolysis rate. Plays a role in control of the cell cycle, stress response, ribosome biogenesis and in those bacteria that undergo differentiation, in morphogenesis control. The chain is GTPase Obg from Clostridium acetobutylicum (strain ATCC 824 / DSM 792 / JCM 1419 / IAM 19013 / LMG 5710 / NBRC 13948 / NRRL B-527 / VKM B-1787 / 2291 / W).